Consider the following 219-residue polypeptide: Clathrin light chain (219 aa).

Residues 32-136 form a disordered region; it reads AEITGGSASA…KKEELRQQSK (105 aa). The tract at residues 96–158 is involved in binding clathrin heavy chain; the sequence is PPPSREEPEK…SISKTKLASR (63 aa). Residues 99 to 136 are compositionally biased toward basic and acidic residues; the sequence is SREEPEKIRKWREEQKQRLEEKDIEEERKKEELRQQSK.

This sequence belongs to the clathrin light chain family. Clathrin coats are formed from molecules containing 3 heavy chains and 3 light chains.

The protein resides in the cytoplasmic vesicle membrane. It localises to the membrane. It is found in the coated pit. Functionally, clathrin is the major protein of the polyhedral coat of coated pits and vesicles. In Drosophila melanogaster (Fruit fly), this protein is Clathrin light chain (Clc).